Reading from the N-terminus, the 107-residue chain is ATP-dependent Clp protease adapter protein ClpS (107 aa).

The interval 1–20 (MAQKHEHDTSVITESAPKQK) is disordered.

Belongs to the ClpS family. As to quaternary structure, binds to the N-terminal domain of the chaperone ClpA.

Involved in the modulation of the specificity of the ClpAP-mediated ATP-dependent protein degradation. The chain is ATP-dependent Clp protease adapter protein ClpS from Myxococcus xanthus (strain DK1622).